The chain runs to 177 residues: Ubiquitin-conjugating enzyme E2 C (177 aa).

A disordered region spans residues 1 to 31 (MSGQNIDPAANQVRQKERPRDMTTSKERHSV). Residues 14–30 (RQKERPRDMTTSKERHS) show a composition bias toward basic and acidic residues. Residues 30 to 175 (SVSKRLQQEL…LHEKYKTAQS (146 aa)) enclose the UBC core domain. Cys-114 serves as the catalytic Glycyl thioester intermediate.

This sequence belongs to the ubiquitin-conjugating enzyme family. In terms of assembly, component of the APC/C complex. Post-translationally, autoubiquitinated by the APC/C complex, leading to its degradation by the proteasome.

The enzyme catalyses S-ubiquitinyl-[E1 ubiquitin-activating enzyme]-L-cysteine + [E2 ubiquitin-conjugating enzyme]-L-cysteine = [E1 ubiquitin-activating enzyme]-L-cysteine + S-ubiquitinyl-[E2 ubiquitin-conjugating enzyme]-L-cysteine.. It catalyses the reaction S-ubiquitinyl-[E1 ubiquitin-activating enzyme]-L-cysteine + [acceptor protein]-L-lysine = [E1 ubiquitin-activating enzyme]-L-cysteine + N(6)-monoubiquitinyl-[acceptor protein]-L-lysine.. It functions in the pathway protein modification; protein ubiquitination. Its function is as follows. Catalyzes the covalent attachment of ubiquitin to other proteins. Acts as an essential factor of the anaphase promoting complex/cyclosome (APC/C), a cell cycle-regulated ubiquitin ligase that is essential for the transition from metaphase to anaphase in mitosis. Involved in both degradation of proteins responsible for maintaining sister chromatid cohesion at the onset of anaphase and of mitotic cyclins A and B at the exit of mitosis. Acts by initiating polyubiquitin chains on APC/C substrates, leading to the degradation of APC/C substrates by the proteasome and promoting mitotic exit. This chain is Ubiquitin-conjugating enzyme E2 C (UBE2C), found in Spisula solidissima (Atlantic surf-clam).